A 500-amino-acid chain; its full sequence is MFYAVQQSEHTETLVVGLFQKSQLTGKALEIDEMLEGHLTQLLKEGDVSAKPNQVSKVFPPSSAGMKRIYFVGLGREANYSFEQAKERFAHVFQAIHKDRKQETAVLLDTFISEDVPPADAAHALAESCLLASYEVQDYKHKSNEPDKQIEAVYVVTDEDTQEVQAGLRVGQAYGQGTNSARTLVNMPGNMLTATDLASYAEELAAKYDFECEILEKSEMEELGMGGILAVNQGSTEPPKMIVLKYQGKKEWEDVVGLVGKGITFDTGGYSIKTKSGIVGMKSDMGGAAAVLGAMETIGELRPEQNVLCVIPSTDNMISGGAMKPDDVIVSLSGKTIEILNTDAEGRLVLADGITYAKQHGASVLVDVATLTGGVVVALGTETTGAMTNDQSFYQQVADAAQECGEAIWQLPITEKDKKRVKSSQMADLSNSPGREGHAIMAGTFLGEFAESTPWVHLDIAGTATANKATCFGPAGATGVMARTLATLAERFTLEEDKNE.

Residues Lys261 and Asp266 each coordinate Mn(2+). Residue Lys273 is part of the active site. The Mn(2+) site is built by Asp284, Asp343, and Glu345. The active site involves Arg347.

It belongs to the peptidase M17 family. Mn(2+) is required as a cofactor.

The protein resides in the cytoplasm. It catalyses the reaction Release of an N-terminal amino acid, Xaa-|-Yaa-, in which Xaa is preferably Leu, but may be other amino acids including Pro although not Arg or Lys, and Yaa may be Pro. Amino acid amides and methyl esters are also readily hydrolyzed, but rates on arylamides are exceedingly low.. The enzyme catalyses Release of an N-terminal amino acid, preferentially leucine, but not glutamic or aspartic acids.. Functionally, presumably involved in the processing and regular turnover of intracellular proteins. Catalyzes the removal of unsubstituted N-terminal amino acids from various peptides. The protein is Probable cytosol aminopeptidase (pepA) of Bacillus subtilis (strain 168).